The primary structure comprises 641 residues: Probable serine protease FE772_23065 (641 aa).

Residues 532-552 (WVELIAILAAAGWIRVMLIGL) traverse the membrane as a helical segment.

It belongs to the peptidase S1 family.

The protein localises to the cell inner membrane. In terms of biological role, possibly a dedicated protease for substrate gasdermin bGSDM; cleaves the bGSDM precursor, releasing the pore-forming moiety, which integrates into the membrane and triggers cell death. Involved in defense against bacteriophages. When this probable 4 gene operon (bGSDM-FE772_23060-FE772_23065-FE772_23070) is inserted into E.coli it provides nearly 100-fold protection against phages T5 and T6 and about 8-fold against phage T4. The operon without bGSDM no longer protects against phage. The chain is Probable serine protease FE772_23065 from Lysobacter enzymogenes.